We begin with the raw amino-acid sequence, 314 residues long: Trihelix transcription factor ASR3 (314 aa).

The disordered stretch occupies residues 1–34 (MALEQLGLGVSAVDGGENSSAPSNDGGDDGVKTA). Residues 38–104 (RWTRQEILVL…QCRKRWSNLA (67 aa)) form the Myb-like domain. A Nuclear localization signal motif is present at residues 84–91 (CKRHGVNR). The EAR 1 motif lies at 161–165 (LSLGL). Thr189 bears the Phosphothreonine; by MAPK4 mark. The tract at residues 207-255 (CVADQGRVKEKQPEAANVEGGSTSQEERKRKRTSFGEKEEEEEEGETKK) is disordered. An EAR 2 motif is present at residues 280–284 (LNLKL).

In terms of assembly, homodimer. Interacts directly with MPK4. In terms of processing, phosphorylated on Thr-189 by MPK4 in response to microbe-associated molecular patterns (MAMPs, e.g. flg22, elf18, chitin, and LPS). This phosphorylation enhances DNA-binding and thus negatively regulates immune gene expression.

The protein localises to the nucleus. Functionally, transcriptional repressor that binds DNA and plays a negative role in regulating microbe-associated molecular patterns-(MAMPs, e.g. flg22, elf18, chitin, and LPS) triggered immunity (PTI) by negatively regulating immune gene expression. The chain is Trihelix transcription factor ASR3 from Arabidopsis thaliana (Mouse-ear cress).